The sequence spans 645 residues: DNA ligase (645 aa).

NAD(+)-binding positions include 30-34 (DIEYD), 79-80 (SM), and E106. Catalysis depends on K108, which acts as the N6-AMP-lysine intermediate. Positions 129, 163, and 302 each coordinate NAD(+). Positions 396, 399, 412, and 417 each coordinate Zn(2+). Residues 570–645 (ISQNVFTKKT…ISEDEFKEML (76 aa)) form the BRCT domain.

Belongs to the NAD-dependent DNA ligase family. LigA subfamily. Requires Mg(2+) as cofactor. Mn(2+) is required as a cofactor.

The enzyme catalyses NAD(+) + (deoxyribonucleotide)n-3'-hydroxyl + 5'-phospho-(deoxyribonucleotide)m = (deoxyribonucleotide)n+m + AMP + beta-nicotinamide D-nucleotide.. Its function is as follows. DNA ligase that catalyzes the formation of phosphodiester linkages between 5'-phosphoryl and 3'-hydroxyl groups in double-stranded DNA using NAD as a coenzyme and as the energy source for the reaction. It is essential for DNA replication and repair of damaged DNA. The sequence is that of DNA ligase from Campylobacter hominis (strain ATCC BAA-381 / DSM 21671 / CCUG 45161 / LMG 19568 / NCTC 13146 / CH001A).